Here is a 279-residue protein sequence, read N- to C-terminus: Oxygen-dependent coproporphyrinogen-III oxidase (279 aa).

S102 lines the substrate pocket. 2 residues coordinate a divalent metal cation: H106 and H116. H116 functions as the Proton donor in the catalytic mechanism. 118-120 (NTR) provides a ligand contact to substrate. Residues H149 and H179 each contribute to the a divalent metal cation site. The tract at residues 244 to 279 (YVEFNLLYDRGTKFGLMTDGNVEAILMSLPPEVKWA) is important for dimerization.

It belongs to the aerobic coproporphyrinogen-III oxidase family. As to quaternary structure, homodimer. A divalent metal cation serves as cofactor.

Its subcellular location is the cytoplasm. The enzyme catalyses coproporphyrinogen III + O2 + 2 H(+) = protoporphyrinogen IX + 2 CO2 + 2 H2O. Its pathway is porphyrin-containing compound metabolism; protoporphyrin-IX biosynthesis; protoporphyrinogen-IX from coproporphyrinogen-III (O2 route): step 1/1. Functionally, involved in the heme biosynthesis. Catalyzes the aerobic oxidative decarboxylation of propionate groups of rings A and B of coproporphyrinogen-III to yield the vinyl groups in protoporphyrinogen-IX. The protein is Oxygen-dependent coproporphyrinogen-III oxidase of Rickettsia bellii (strain RML369-C).